The primary structure comprises 209 residues: Large ribosomal subunit protein uL3 (209 aa).

The interval 118-152 is disordered; it reads GFQGAIKRHGQSRGPMSHGSRYHRRPGSMGPVDPN.

Belongs to the universal ribosomal protein uL3 family. In terms of assembly, part of the 50S ribosomal subunit. Forms a cluster with proteins L14 and L19.

One of the primary rRNA binding proteins, it binds directly near the 3'-end of the 23S rRNA, where it nucleates assembly of the 50S subunit. This is Large ribosomal subunit protein uL3 from Bacillus licheniformis (strain ATCC 14580 / DSM 13 / JCM 2505 / CCUG 7422 / NBRC 12200 / NCIMB 9375 / NCTC 10341 / NRRL NRS-1264 / Gibson 46).